The primary structure comprises 78 residues: Small ribosomal subunit protein bS16 (78 aa).

Belongs to the bacterial ribosomal protein bS16 family.

This Thermodesulfovibrio yellowstonii (strain ATCC 51303 / DSM 11347 / YP87) protein is Small ribosomal subunit protein bS16.